We begin with the raw amino-acid sequence, 740 residues long: Catalase-peroxidase (740 aa).

The tryptophyl-tyrosyl-methioninium (Trp-Tyr) (with M-255) cross-link spans 107-229; that stretch reads WHAAGTYRIH…LAAVQMGLIY (123 aa). Residue His-108 is the Proton acceptor of the active site. Positions 229-255 form a cross-link, tryptophyl-tyrosyl-methioninium (Tyr-Met) (with W-107); it reads YVNPEGPNGNPDPMAAAVDIRETFRRM. Heme b is bound at residue His-270. The active-site Tryptophan radical intermediate is Trp-321.

This sequence belongs to the peroxidase family. Peroxidase/catalase subfamily. As to quaternary structure, homodimer. The cofactor is heme b. Post-translationally, formation of the three residue Trp-Tyr-Met cross-link is important for the catalase, but not the peroxidase activity of the enzyme.

It carries out the reaction H2O2 + AH2 = A + 2 H2O. The enzyme catalyses 2 H2O2 = O2 + 2 H2O. Bifunctional enzyme with both catalase and broad-spectrum peroxidase activity, oxidizing various electron donors including NADP(H). Protects M.tuberculosis against toxic reactive oxygen species (ROS) including hydrogen peroxide as well as organic peroxides and thus contributes to its survival within host macrophages by countering the phagocyte oxidative burst. Also displays efficient peroxynitritase activity, which may help the bacterium to persist in macrophages. In terms of biological role, catalyzes the oxidative activation of the antitubercular pro-drug isoniazid (INH) to generate an isonicotinoyl radical that then reacts nonenzymatically with NAD to form an isonicotinoyl-NAD adduct which inhibits InhA. This Mycobacterium tuberculosis (strain CDC 1551 / Oshkosh) protein is Catalase-peroxidase.